The primary structure comprises 224 residues: Adenylate kinase (224 aa).

ATP is bound at residue Gly10 to Thr15. The NMP stretch occupies residues Glu30–Val59. AMP contacts are provided by residues Ser31, Arg36, Asp57–Val59, Gly85–Arg88, and Gln92. The interval Gly126–Asp165 is LID. Residue Arg127 participates in ATP binding. Positions 162 and 174 each coordinate AMP. Pro211 contacts ATP.

This sequence belongs to the adenylate kinase family. In terms of assembly, monomer.

It is found in the cytoplasm. The enzyme catalyses AMP + ATP = 2 ADP. It participates in purine metabolism; AMP biosynthesis via salvage pathway; AMP from ADP: step 1/1. Its function is as follows. Catalyzes the reversible transfer of the terminal phosphate group between ATP and AMP. Plays an important role in cellular energy homeostasis and in adenine nucleotide metabolism. The chain is Adenylate kinase from Desulfosudis oleivorans (strain DSM 6200 / JCM 39069 / Hxd3) (Desulfococcus oleovorans).